The following is an 815-amino-acid chain: ABC transporter G family member 7 (815 aa).

2 disordered regions span residues 81–141 (NNID…TPNF) and 177–249 (KQIK…TNGK). Positions 164–199 (ENISYKTENRNYKKQIKDEKKRKKKLEMERSNSSNS) form a coiled coil. A compositionally biased stretch (low complexity) spans 194–210 (SNSSNSNSSYDVESSAS). Residues 211–248 (GLQTPQQSRSSILPTNSLNISKIDQSMNPQQTRSTTNG) are compositionally biased toward polar residues. Positions 242 to 485 (TRSTTNGKIE…SLPNQYQCPN (244 aa)) constitute an ABC transporter domain. 274–281 (GPSGSGKS) provides a ligand contact to ATP. The ABC transmembrane type-2 domain occupies 562–810 (TQYITRLSGG…VSGYWAISKL (249 aa)). The next 7 membrane-spanning stretches (helical) occupy residues 568-588 (LSGG…LSPS), 598-618 (ILFF…TLFL), 647-667 (AFIQ…INHL), 675-695 (FITY…IIAI), 706-726 (FIYG…LVPV), 732-752 (SFGW…VMVA), and 788-808 (GIGI…WAIS).

The protein belongs to the ABC transporter superfamily. ABCG family.

Its subcellular location is the membrane. This is ABC transporter G family member 7 (abcG7) from Dictyostelium discoideum (Social amoeba).